Reading from the N-terminus, the 738-residue chain is Protein Aster-B (738 aa).

Residues 1–81 are disordered; that stretch reads MKGFKLSCTA…SGGKNSKKSQ (81 aa). Over residues 8–19 the composition is skewed to polar residues; that stretch reads CTASNSNRSTPA. Residues Ser-28 and Ser-30 each carry the phosphoserine modification. The span at 41 to 51 shows a compositional bias: basic and acidic residues; the sequence is MVEKGSDHSSD. Low complexity predominate over residues 59–70; the sequence is QGVQRSCSSQSG. The GRAM domain occupies 96-163; the sequence is EDFRKLFKQL…KDICSMTKEK (68 aa). The disordered stretch occupies residues 254 to 301; the sequence is EENEVNDSSSKSSIETKPDASPQLPKKSITNSTLTSTGSSEAPVSFDG. The segment covering 259–268 has biased composition (polar residues); it reads NDSSSKSSIE. The residue at position 274 (Ser-274) is a Phosphoserine. Over residues 281–295 the composition is skewed to polar residues; the sequence is SITNSTLTSTGSSEA. The VASt domain maps to 372–543; it reads SGRQYVNEVF…ELAKTESTYL (172 aa). A Phosphotyrosine modification is found at Tyr-389. The disordered stretch occupies residues 544 to 566; it reads AEMHRQSPKEKASKTTTVRRRKR. Over residues 545 to 556 the composition is skewed to basic and acidic residues; sequence EMHRQSPKEKAS. Phosphoserine is present on residues Ser-550 and Ser-581. Phosphothreonine occurs at positions 584, 585, and 587. A helical membrane pass occupies residues 623 to 643; the sequence is LLLVISCVICFSLVLLVILNM.

The protein resides in the endoplasmic reticulum membrane. It localises to the cell membrane. Its function is as follows. Cholesterol transporter that mediates non-vesicular transport of cholesterol from the plasma membrane (PM) to the endoplasmic reticulum (ER). Contains unique domains for binding cholesterol and the PM, thereby serving as a molecular bridge for the transfer of cholesterol from the PM to the ER. Plays a crucial role in cholesterol homeostasis in the adrenal gland and has the unique ability to localize to the PM based on the level of membrane cholesterol. In lipid-poor conditions localizes to the ER membrane and in response to excess cholesterol in the PM is recruited to the endoplasmic reticulum-plasma membrane contact sites (EPCS) which is mediated by the GRAM domain. At the EPCS, the sterol-binding VASt/ASTER domain binds to the cholesterol in the PM and facilitates its transfer from the PM to ER. In Homo sapiens (Human), this protein is Protein Aster-B (GRAMD1B).